The chain runs to 137 residues: Small ribosomal subunit protein uS12 (137 aa).

The disordered stretch occupies residues 1 to 57; that stretch reads MPTINQLIRKGRKSKGSKSNSPALNFGYNSYKKVQTNNSAPQKRGVATRVGTMTPKK. Over residues 32–41 the composition is skewed to polar residues; sequence KKVQTNNSAP. Residue Asp102 is modified to 3-methylthioaspartic acid.

The protein belongs to the universal ribosomal protein uS12 family. As to quaternary structure, part of the 30S ribosomal subunit. Contacts proteins S8 and S17. May interact with IF1 in the 30S initiation complex.

With S4 and S5 plays an important role in translational accuracy. Its function is as follows. Interacts with and stabilizes bases of the 16S rRNA that are involved in tRNA selection in the A site and with the mRNA backbone. Located at the interface of the 30S and 50S subunits, it traverses the body of the 30S subunit contacting proteins on the other side and probably holding the rRNA structure together. The combined cluster of proteins S8, S12 and S17 appears to hold together the shoulder and platform of the 30S subunit. The chain is Small ribosomal subunit protein uS12 from Ligilactobacillus salivarius (strain UCC118) (Lactobacillus salivarius).